We begin with the raw amino-acid sequence, 125 residues long: Small ribosomal subunit protein bS6 (125 aa).

The disordered stretch occupies residues 99 to 125 (ASPMVKAREERKPLTEVENNDFEDAEE). Residues 104–113 (KAREERKPLT) show a composition bias toward basic and acidic residues. A compositionally biased stretch (acidic residues) spans 116–125 (ENNDFEDAEE).

Belongs to the bacterial ribosomal protein bS6 family.

Binds together with bS18 to 16S ribosomal RNA. The chain is Small ribosomal subunit protein bS6 from Histophilus somni (strain 2336) (Haemophilus somnus).